The sequence spans 414 residues: Esterase FrsA (414 aa).

It belongs to the FrsA family.

It carries out the reaction a carboxylic ester + H2O = an alcohol + a carboxylate + H(+). Its function is as follows. Catalyzes the hydrolysis of esters. The polypeptide is Esterase FrsA (Klebsiella pneumoniae (strain 342)).